Here is a 209-residue protein sequence, read N- to C-terminus: Large ribosomal subunit protein uL3 (209 aa).

Residues 128–156 (FAGGSRTHGQSDRLRAPGSVGGSSDPSRT) form a disordered region.

The protein belongs to the universal ribosomal protein uL3 family. In terms of assembly, part of the 50S ribosomal subunit. Forms a cluster with proteins L14 and L19.

One of the primary rRNA binding proteins, it binds directly near the 3'-end of the 23S rRNA, where it nucleates assembly of the 50S subunit. The chain is Large ribosomal subunit protein uL3 from Prosthecochloris aestuarii (strain DSM 271 / SK 413).